Reading from the N-terminus, the 556-residue chain is Formate--tetrahydrofolate ligase (556 aa).

Position 65–72 (65–72) interacts with ATP; sequence TPAGEGKS.

The protein belongs to the formate--tetrahydrofolate ligase family.

The enzyme catalyses (6S)-5,6,7,8-tetrahydrofolate + formate + ATP = (6R)-10-formyltetrahydrofolate + ADP + phosphate. The protein operates within one-carbon metabolism; tetrahydrofolate interconversion. This chain is Formate--tetrahydrofolate ligase, found in Streptococcus pneumoniae serotype 19F (strain G54).